Here is a 388-residue protein sequence, read N- to C-terminus: Processive diacylglycerol beta-glucosyltransferase (388 aa).

Belongs to the glycosyltransferase 28 family. UgtP subfamily.

It localises to the cell membrane. The enzyme catalyses a 1,2-diacyl-3-O-(beta-D-glucopyranosyl)-sn-glycerol + UDP-alpha-D-glucose = a 1,2-diacyl-3-O-(beta-D-Glc-(1-&gt;6)-beta-D-Glc)-sn-glycerol + UDP + H(+). The catalysed reaction is a 1,2-diacyl-3-O-(beta-D-Glc-(1-&gt;6)-beta-D-Glc)-sn-glycerol + UDP-alpha-D-glucose = a 1,2-diacyl-3-O-(beta-D-Glc-(1-&gt;6)-beta-D-Glc-(1-&gt;6)-beta-D-Glc)-sn-glycerol + UDP + H(+). It catalyses the reaction a 1,2-diacyl-sn-glycerol + UDP-alpha-D-glucose = a 1,2-diacyl-3-O-(beta-D-glucopyranosyl)-sn-glycerol + UDP + H(+). Its pathway is glycolipid metabolism; diglucosyl-diacylglycerol biosynthesis. Its function is as follows. Processive glucosyltransferase involved in the biosynthesis of both the bilayer- and non-bilayer-forming membrane glucolipids. Is able to successively transfer up to three glucosyl residues to diacylglycerol (DAG), thereby catalyzing the formation of beta-monoglucosyl-DAG (3-O-(beta-D-glucopyranosyl)-1,2-diacyl-sn-glycerol), beta-diglucosyl-DAG (3-O-(beta-D-glucopyranosyl-beta-(1-&gt;6)-D-glucopyranosyl)-1,2-diacyl-sn-glycerol) and beta-triglucosyl-DAG (3-O-(beta-D-glucopyranosyl-beta-(1-&gt;6)-D-glucopyranosyl-beta-(1-&gt;6)-D-glucopyranosyl)-1,2-diacyl-sn-glycerol). Beta-diglucosyl-DAG is the predominant glycolipid found in Bacillales and is also used as a membrane anchor for lipoteichoic acid (LTA). The sequence is that of Processive diacylglycerol beta-glucosyltransferase from Bacillus mycoides (strain KBAB4) (Bacillus weihenstephanensis).